The following is a 159-amino-acid chain: Vesicle transport protein SFT2A (159 aa).

Residues 1–36 lie on the Cytoplasmic side of the membrane; it reads MEKLRRVLSGQDDEEQGLTAQVLDASSLSFNTRLKW. A Phosphoserine modification is found at Ser-9. A helical transmembrane segment spans residues 37–57; it reads FVICFVAGIFFSFLGTGLLWL. The Lumenal portion of the chain corresponds to 58–62; that stretch reads PNGMK. A helical membrane pass occupies residues 63-83; that stretch reads LFAVFYTLGNLAALASTCFLM. The Cytoplasmic segment spans residues 84–97; sequence GPVKQLKKMFETTR. A helical membrane pass occupies residues 98–118; sequence LLATIIMLLCLVFTLCAALWW. At 119-122 the chain is on the lumenal side; it reads RKKG. A helical transmembrane segment spans residues 123-143; the sequence is LALLFCILQFLSMTWYSLSYI. Topologically, residues 144 to 159 are cytoplasmic; it reads PYARDAVLKCCSSLLG.

Belongs to the SFT2 family.

The protein localises to the membrane. Its function is as follows. May be involved in fusion of retrograde transport vesicles derived from an endocytic compartment with the Golgi complex. The protein is Vesicle transport protein SFT2A of Mus musculus (Mouse).